The sequence spans 429 residues: G2/mitotic-specific cyclin-B1 (429 aa).

Over residues Met-1–Glu-14 the composition is skewed to polar residues. Disordered regions lie at residues Met-1–Met-21 and Thr-71–Thr-128. Lys-73 bears the N6-acetyllysine mark. Residues Pro-92 to Val-106 show a composition bias toward acidic residues. Ser-122 bears the Phosphoserine; by CDK1 mark. At Ser-124 the chain carries Phosphoserine. Phosphoserine; by PLK1 is present on Ser-129. Ser-143 is subject to Phosphoserine. Interaction with CDK2 stretches follow at residues Glu-165 to Tyr-173 and Tyr-254 to Met-257. Position 317 is a phosphothreonine (Thr-317).

The protein belongs to the cyclin family. Cyclin AB subfamily. Interacts with the CDC2 protein kinase to form a serine/threonine kinase holoenzyme complex also known as maturation promoting factor (MPF). The cyclin subunit imparts substrate specificity to the complex. Binds HEI10. Interacts with catalytically active RALBP1 and CDC2 during mitosis to form an endocytotic complex during interphase. Interacts with CCNF; interaction is required for nuclear localization. Interacts with CDK5RAP3. Interacts with RFPL4A and UBE2A. Interacts with INCA1. Ubiquitinated by the SCF(NIPA) complex during interphase, leading to its destruction. Not ubiquitinated during G2/M phases. Post-translationally, phosphorylated by PLK1 at Ser-129 on centrosomes during prophase: phosphorylation by PLK1 does not cause nuclear import. Phosphorylation at Ser-143 was also reported to be mediated by PLK1 but Ser-129 seems to be the primary phosphorylation site.

It is found in the cytoplasm. The protein localises to the nucleus. It localises to the cytoskeleton. The protein resides in the microtubule organizing center. Its subcellular location is the centrosome. Its function is as follows. Essential for the control of the cell cycle at the G2/M (mitosis) transition. The sequence is that of G2/mitotic-specific cyclin-B1 (CCNB1) from Cricetulus griseus (Chinese hamster).